Here is a 172-residue protein sequence, read N- to C-terminus: Cytidylate kinase (172 aa).

7 to 15 (GPPGSGTST) is a binding site for ATP.

This sequence belongs to the cytidylate kinase family. Type 2 subfamily.

It localises to the cytoplasm. It catalyses the reaction CMP + ATP = CDP + ADP. It carries out the reaction dCMP + ATP = dCDP + ADP. This chain is Cytidylate kinase, found in Methanothrix thermoacetophila (strain DSM 6194 / JCM 14653 / NBRC 101360 / PT) (Methanosaeta thermophila).